The chain runs to 212 residues: Lipid A acyltransferase PagP (212 aa).

Residues 1-24 (MYLKRTLITLSLITLPIVPFLSYA) form the signal peptide. A compositionally biased stretch (polar residues) spans 36–47 (NLAPVTVDSSDP). A disordered region spans residues 36 to 56 (NLAPVTVDSSDPVSDKQGESW). Active-site residues include His-84, Asp-127, and Ser-128.

Belongs to the lipid A palmitoyltransferase family. In terms of assembly, homodimer.

It is found in the cell outer membrane. The enzyme catalyses a lipid A + a 1,2-diacyl-sn-glycero-3-phosphocholine = a hepta-acyl lipid A + a 2-acyl-sn-glycero-3-phosphocholine. The catalysed reaction is a lipid IVA + a 1,2-diacyl-sn-glycero-3-phosphocholine = a lipid IVB + a 2-acyl-sn-glycero-3-phosphocholine. It catalyses the reaction a lipid IIA + a 1,2-diacyl-sn-glycero-3-phosphocholine = a lipid IIB + a 2-acyl-sn-glycero-3-phosphocholine. In terms of biological role, transfers a fatty acid residue from the sn-1 position of a phospholipid to the N-linked hydroxyfatty acid chain on the proximal unit of lipid A or its precursors. This Pectobacterium carotovorum subsp. carotovorum (strain PC1) protein is Lipid A acyltransferase PagP.